Here is a 904-residue protein sequence, read N- to C-terminus: Transcription factor E2F7 (904 aa).

The segment at 61-80 is disordered; it reads TPDRNPITPVKPVDRQPQVE. S96 carries the post-translational modification Phosphoserine. The DNA-binding element occupies 143–212; sequence RKQKSLGLLC…VAKNQYGWHG (70 aa). Residues 252 to 269 show a composition bias toward basic and acidic residues; the sequence is GERRKDGSPDPRDPHLLD. Residues 252-283 form a disordered region; sequence GERRKDGSPDPRDPHLLDFSEADYPSSSANSR. Residues 283–368 mediate DNA binding; the sequence is RKDKSLRIMS…GRKPAFKWIG (86 aa). S411 carries the phosphoserine modification. The segment at 560–628 is disordered; it reads LSPESRSEED…VMPKKPSSST (69 aa). S833 is modified (phosphoserine). The segment at 846 to 904 is disordered; sequence AEQSPAPATPKSIQRRHRETFFKTPGSLGDPVFRRKERNQSRNTSSAQRRLEISSSGPD. Residues 886–904 are compositionally biased toward polar residues; that stretch reads SRNTSSAQRRLEISSSGPD.

The protein belongs to the E2F/DP family. In terms of assembly, interacts with HIF1A. Homodimer and heterodimer: mainly forms homodimers and, to a lesser extent, heterodimers with E2F8. Dimerization is important for DNA-binding. Interacts with MN1. In terms of tissue distribution, widely expressed with highest levels in skin and thymus and very low levels in brain, muscle and stomach. Expressed in trophoblast giant cells throughout placenta development (at protein level).

The protein localises to the nucleus. In terms of biological role, atypical E2F transcription factor that participates in various processes such as angiogenesis, polyploidization of specialized cells and DNA damage response. Mainly acts as a transcription repressor that binds DNA independently of DP proteins and specifically recognizes the E2 recognition site 5'-TTTC[CG]CGC-3'. Directly represses transcription of classical E2F transcription factors such as E2F1. Acts as a regulator of S-phase by recognizing and binding the E2-related site 5'-TTCCCGCC-3' and mediating repression of G1/S-regulated genes. Plays a key role in polyploidization of cells in placenta and liver by regulating the endocycle, probably by repressing genes promoting cytokinesis and antagonizing action of classical E2F proteins (E2F1, E2F2 and/or E2F3). Required for placental development by promoting polyploidization of trophoblast giant cells. Also involved in DNA damage response: up-regulated by p53/TP53 following genotoxic stress and acts as a downstream effector of p53/TP53-dependent repression by mediating repression of indirect p53/TP53 target genes involved in DNA replication. Acts as a promoter of sprouting angiogenesis, possibly by acting as a transcription activator: associates with HIF1A, recognizes and binds the VEGFA promoter, which is different from canonical E2 recognition site, and activates expression of the VEGFA gene. Acts as a negative regulator of keratinocyte differentiation. This chain is Transcription factor E2F7 (E2f7), found in Mus musculus (Mouse).